We begin with the raw amino-acid sequence, 287 residues long: Phosphatidylserine decarboxylase proenzyme (287 aa).

Active-site charge relay system; for autoendoproteolytic cleavage activity residues include aspartate 90, histidine 147, and serine 252. The active-site Schiff-base intermediate with substrate; via pyruvic acid; for decarboxylase activity is serine 252. Serine 252 is modified (pyruvic acid (Ser); by autocatalysis).

It belongs to the phosphatidylserine decarboxylase family. PSD-B subfamily. Prokaryotic type I sub-subfamily. In terms of assembly, heterodimer of a large membrane-associated beta subunit and a small pyruvoyl-containing alpha subunit. Pyruvate serves as cofactor. Is synthesized initially as an inactive proenzyme. Formation of the active enzyme involves a self-maturation process in which the active site pyruvoyl group is generated from an internal serine residue via an autocatalytic post-translational modification. Two non-identical subunits are generated from the proenzyme in this reaction, and the pyruvate is formed at the N-terminus of the alpha chain, which is derived from the carboxyl end of the proenzyme. The autoendoproteolytic cleavage occurs by a canonical serine protease mechanism, in which the side chain hydroxyl group of the serine supplies its oxygen atom to form the C-terminus of the beta chain, while the remainder of the serine residue undergoes an oxidative deamination to produce ammonia and the pyruvoyl prosthetic group on the alpha chain. During this reaction, the Ser that is part of the protease active site of the proenzyme becomes the pyruvoyl prosthetic group, which constitutes an essential element of the active site of the mature decarboxylase.

The protein localises to the cell membrane. It catalyses the reaction a 1,2-diacyl-sn-glycero-3-phospho-L-serine + H(+) = a 1,2-diacyl-sn-glycero-3-phosphoethanolamine + CO2. Its pathway is phospholipid metabolism; phosphatidylethanolamine biosynthesis; phosphatidylethanolamine from CDP-diacylglycerol: step 2/2. Catalyzes the formation of phosphatidylethanolamine (PtdEtn) from phosphatidylserine (PtdSer). This is Phosphatidylserine decarboxylase proenzyme from Pseudomonas putida (strain ATCC 700007 / DSM 6899 / JCM 31910 / BCRC 17059 / LMG 24140 / F1).